The chain runs to 356 residues: Heparan sulfate 2-O-sulfotransferase 1 (356 aa).

At 1-11 the chain is on the cytoplasmic side; sequence MGLLRIMMPPK. Residues 12-28 form a helical; Signal-anchor for type II membrane protein membrane-spanning segment; sequence LQLLAVVAFAVAMLFLE. Residues 24-51 are a coiled coil; that stretch reads MLFLENQIQKLEESRSKLERAIARHEVR. At 29 to 356 the chain is on the lumenal side; that stretch reads NQIQKLEESR…FYEKIYPKSN (328 aa). K83, T84, A85, S86, T87, and S88 together coordinate adenosine 3',5'-bisphosphate. Residues N108 and N127 are each glycosylated (N-linked (GlcNAc...) asparagine). Residues H140 and H142 contribute to the active site. Adenosine 3',5'-bisphosphate-binding residues include R164 and S172. 2 disulfide bridges follow: C201–C209 and C222–C228. 4 residues coordinate adenosine 3',5'-bisphosphate: Y279, S285, T290, and K293.

The protein belongs to the sulfotransferase 3 family. As to quaternary structure, homotrimer. Interacts with the C5-epimerase GLCE. Post-translationally, N-glycosylated.

The protein localises to the golgi apparatus membrane. Catalyzes the transfer of a sulfo group from 3'-phospho-5'-adenylyl sulfate (PAPS) to the 2-OH position of iduronic acid (IdoA) or glucuronic acid (GlcA) within the heparan sulfate (HS) chain and participates in HS biosynthesis. Required for metanephric development of kidney formation, suggesting that 2-O-sulfation within HS is essential for signaling between ureteric bud and metanephric mesenchyme. The protein is Heparan sulfate 2-O-sulfotransferase 1 of Pongo abelii (Sumatran orangutan).